Consider the following 1329-residue polypeptide: MALRPGAGASGAAGAGTGPGGAGSFMFPVAGGMRPPQGLIPMQQQGFPMVSVMQPNMQGMMGMNYSSQMSQGPIAMQAGIPMGPMPAAGVPFLGQPPFLGMRPAAPQYTPDMQKQFAEEQQKRFEQQQKLLEEERKRRQFEEQKQKLRLLSSVKPKTGEKNRDDALEAIKGNLDGFSRDAKMHPTPASHPKKPDCPTSSHSTKTVSPSSAFLGEDEFSGFMQGPVELPTCGPSSTAQPFQSFLPSTPLGQLHTQKAGAQPLPPGQAPVSFAVHGVHGQIPCLSAASASHSMQKAGPSLEEKLLVSCDISASGQEHIKLSSPEAGHRAVVPGSSKNSPGLMAHNGGAVDGCVSGPTTAVAEKTSDQNLSKEESGVGVFPSQDPVQPRMPPWIYNESLVPDAYKKILETTMTPTGIDTAKLYPILMSSGLPRETLGQIWALANRTTPGKLTKEELYTVLAMVAVTQRGVPAMSPDTLNQFPAAPIPTLSGFPMTLPTPVSQPTAMTSGPAGSIPLSLGQPIMGINLVGPVGGAAAPTSSGFMPAYPSNQVGKTEEDDFQDFQDASKSGSIDDSFTDFQEVPASSKTSNSQHGNSAPSLLIPLPGTKASTDKYAVFKGISAEKPSENPASFGESGDKYSAFRELEPTADSKPLGESFAEFRSTGTDDGFTDFKTADSVSPLEPPTKDSFPSAFASGAAQQTQTQVKTPLNLADLDMFSSVDCSGEKPVPFSAAFSTSKSVSSRPQPAGSAAAPASLASTKASSLADDFGEFNLFGEYSNPASVGEQDDFADFMAFGNSSIPSEPKADDKYEALREEGSPGALSTSTVEGAHNPPVSSSKYDVFKQLSLEGAGLAIEEFKENTPSTKSDGDFADFHSSKFSSTSSDKSLGEKAVAFRHAKEDSASVKSLDLPSIGGSSVGKEDSEDALSVQFDMKLADVGGDLKHVMSDSSLDLPTVSGQHPPAAGSALASEDALPETPFPAFASFKDMMPQTTEQKEYESGDFQDFTRQDMPMVDRSQENTCPSPASSVASHETPKEGADDFGEFQSEKPKISKFDFLVANSQSKMKSSEEMIKSELATFDLSVQGSHKRSLSLGDKEISRSSPSPALEQPFRDRSNTLSERAALPVIRDKYKDLTGEVEENERYAYEWQRCLGSALDVIKKANDTLNGISSSAVCTEVIQSAQGMEYLLGVVEVYRVTKRVELGIKATAVCSEKLQQLLKDIDKVWNNLIGFMSLTTLTPDENSLDFSSCMLRPGIKNAQELACGVCLLNVDSRSRKEETPAEEQPKKAFNSETDSFKLAYGGHQYHASCANFWINCVEPKPPGLLLPDLL.

A coiled-coil region spans residues 112–152 (MQKQFAEEQQKRFEQQQKLLEEERKRRQFEEQKQKLRLLSS). The segment at 175-211 (GFSRDAKMHPTPASHPKKPDCPTSSHSTKTVSPSSAF) is disordered. The span at 197-209 (TSSHSTKTVSPSS) shows a compositional bias: low complexity. The 112-residue stretch at 393 to 504 (NESLVPDAYK…TPVSQPTAMT (112 aa)) folds into the EH domain. The DFXDF motif 1 signature appears at 555-559 (DFQDF). A Phosphoserine modification is found at S571. Over residues 578–594 (VPASSKTSNSQHGNSAP) the composition is skewed to polar residues. Residues 578-600 (VPASSKTSNSQHGNSAPSLLIPL) form a disordered region. An N6-acetyllysine modification is found at K609. The segment at 614–878 (KGISAEKPSE…ADFHSSKFSS (265 aa)) is interaction with AP1G1. Disordered stretches follow at residues 661-701 (GTDD…TQTQ) and 730-753 (AFST…PASL). S676 bears the Phosphoserine mark. Residues 761–773 (LADDFGEFNLFGE) form an interaction with AP1G1, AP1G2 and GGA1 region. Positions 785-789 (DFADF) match the DFXDF motif 2 motif. The disordered stretch occupies residues 797–835 (IPSEPKADDKYEALREEGSPGALSTSTVEGAHNPPVSSS). The span at 801–814 (PKADDKYEALREEG) shows a compositional bias: basic and acidic residues. Position 815 is a phosphoserine (S815). Residue K836 is modified to N6-acetyllysine. S844 and S864 each carry phosphoserine. Disordered stretches follow at residues 856 to 922 (KENT…DSED), 941 to 1042 (HVMS…FGEF), and 1088 to 1113 (SLSL…RDRS). The segment covering 864–873 (SDGDFADFHS) has biased composition (basic and acidic residues). The DFXDF motif 3 signature appears at 867–871 (DFADF). Low complexity predominate over residues 874–883 (SKFSSTSSDK). Phosphoserine is present on residues S904, S944, S947, S997, S1021, S1088, S1090, S1102, and S1113. Residues 944–955 (SDSSLDLPTVSG) show a composition bias toward polar residues. The span at 1016–1028 (ENTCPSPASSVAS) shows a compositional bias: polar residues. Phosphothreonine is present on T1115.

In terms of assembly, self-associates. Interacts with GGA1 (via GAE domain). Interacts with GGA2 and GGA3. Interacts with AP1G1 (via GAE domain), a subunit of adapter protein complex AP-1. Interacts with AP1G2 (via GAE domain) a subunit of adapter protein complex AP-1. Component of the aftiphilin/p200/gamma-synergin complex, at least composed of AFTPH/aftiphilin, HEATR5B/p200a and SYNRG/gamma-synergin, which plays a role in the AP1G1/AP-1-mediated trafficking of transferrin from early to recycling endosomes. Within the complex interacts with AFTPH/aftiphilin and HEATR5B/p200a; the interactions are direct. Interacts (via EH domain) with SCAMP1. In terms of tissue distribution, detected in brain and liver (at protein level). Ubiquitously expressed.

Its subcellular location is the cytoplasm. The protein localises to the golgi apparatus. The protein resides in the trans-Golgi network membrane. It is found in the perinuclear region. It localises to the cytoplasmic vesicle. Its subcellular location is the clathrin-coated vesicle. Plays a role in endocytosis and/or membrane trafficking at the trans-Golgi network (TGN). May act by linking the adapter protein complex AP-1 to other proteins. Component of clathrin-coated vesicles. Component of the aftiphilin/p200/gamma-synergin complex, which plays roles in AP1G1/AP-1-mediated protein trafficking including the trafficking of transferrin from early to recycling endosomes, and the membrane trafficking of furin and the lysosomal enzyme cathepsin D between the trans-Golgi network (TGN) and endosomes. In Rattus norvegicus (Rat), this protein is Synergin gamma (Synrg).